The following is a 170-amino-acid chain: Adenine phosphoribosyltransferase (170 aa).

Belongs to the purine/pyrimidine phosphoribosyltransferase family. Homodimer.

It is found in the cytoplasm. The catalysed reaction is AMP + diphosphate = 5-phospho-alpha-D-ribose 1-diphosphate + adenine. It participates in purine metabolism; AMP biosynthesis via salvage pathway; AMP from adenine: step 1/1. Its function is as follows. Catalyzes a salvage reaction resulting in the formation of AMP, that is energically less costly than de novo synthesis. The chain is Adenine phosphoribosyltransferase from Bacillus pumilus (strain SAFR-032).